We begin with the raw amino-acid sequence, 506 residues long: Anaerobic nitric oxide reductase transcription regulator NorR (506 aa).

Position 57 is a 4-aspartylphosphate (aspartate 57). Residues 187 to 416 enclose the Sigma-54 factor interaction domain; the sequence is MIGLSPAMTQ…LEHAIHRAVV (230 aa). Residues 215–222 and 278–287 contribute to the ATP site; these read GETGTGKE and ADNGTLFLDE. Residues 481–500 constitute a DNA-binding region (H-T-H motif); it reads WAASARALETDVANLHRLAK.

Its pathway is nitrogen metabolism; nitric oxide reduction. In terms of biological role, required for the expression of anaerobic nitric oxide (NO) reductase, acts as a transcriptional activator for at least the norVW operon. Activation also requires sigma-54. The polypeptide is Anaerobic nitric oxide reductase transcription regulator NorR (Salmonella choleraesuis (strain SC-B67)).